Consider the following 1066-residue polypeptide: Zinc finger and BTB domain-containing protein 21 (1066 aa).

The region spanning 30-96 is the BTB domain; that stretch reads CDVLLIVGDQ…IYSSSLFVEK (67 aa). Positions 30-96 are mediates homodimerization; the sequence is CDVLLIVGDQ…IYSSSLFVEK (67 aa). Residue K40 forms a Glycyl lysine isopeptide (Lys-Gly) (interchain with G-Cter in SUMO1); alternate linkage. A Glycyl lysine isopeptide (Lys-Gly) (interchain with G-Cter in SUMO2); alternate cross-link involves residue K40. Residues 154–177 show a composition bias toward polar residues; that stretch reads SRNEAQGKTVSQNQPDVSHTSRPS. The disordered stretch occupies residues 154-196; the sequence is SRNEAQGKTVSQNQPDVSHTSRPSPSIAVKANTNKPHVPKPIE. Glycyl lysine isopeptide (Lys-Gly) (interchain with G-Cter in SUMO2) cross-links involve residues K255, K266, K273, K312, and K337. Phosphoserine occurs at positions 345 and 381. K383 is covalently cross-linked (Glycyl lysine isopeptide (Lys-Gly) (interchain with G-Cter in SUMO2)). A compositionally biased stretch (basic and acidic residues) spans 388 to 399; the sequence is DCSEKTALDDRP. Disordered regions lie at residues 388 to 442, 454 to 485, and 498 to 525; these read DCSE…DPSD, TAAA…AKRR, and KVNE…ADFP. 2 positions are modified to phosphoserine: S411 and S422. K430 participates in a covalent cross-link: Glycyl lysine isopeptide (Lys-Gly) (interchain with G-Cter in SUMO2). T431 bears the Phosphothreonine mark. S434, S435, and S438 each carry phosphoserine. Residues 466–478 are compositionally biased toward basic and acidic residues; sequence LSLKTEDDQKDMS. Glycyl lysine isopeptide (Lys-Gly) (interchain with G-Cter in SUMO2) cross-links involve residues K469 and K475. C2H2-type zinc fingers lie at residues 546–569 and 575–598; these read FKCK…NMYH and YACD…QTQH. S605 is subject to Phosphoserine. Residues K617, K643, and K659 each participate in a glycyl lysine isopeptide (Lys-Gly) (interchain with G-Cter in SUMO2) cross-link. The C2H2-type 3 zinc-finger motif lies at 670-692; sequence YICTYCGKAYRFLSQFKQHIKMH. A Glycyl lysine isopeptide (Lys-Gly) (interchain with G-Cter in SUMO2) cross-link involves residue K702. Position 714 is a phosphoserine (S714). The C2H2-type 4; atypical zinc finger occupies 748 to 770; it reads AVCPYCSLRFFSPELKQEHESKC. Residues K763 and K785 each participate in a glycyl lysine isopeptide (Lys-Gly) (interchain with G-Cter in SUMO2) cross-link. The C2H2-type 5 zinc-finger motif lies at 775–798; that stretch reads LTCLECMRTFKSSFSIWRHQVEVH. A disordered region spans residues 806 to 840; the sequence is TENFSLPVLDHNGDVTGSSRPQSQPEPNKVNHIVT. A compositionally biased stretch (polar residues) spans 820–831; sequence VTGSSRPQSQPE. A Glycyl lysine isopeptide (Lys-Gly) (interchain with G-Cter in SUMO2) cross-link involves residue K875. K879 participates in a covalent cross-link: Glycyl lysine isopeptide (Lys-Gly) (interchain with G-Cter in SUMO1); alternate. A Glycyl lysine isopeptide (Lys-Gly) (interchain with G-Cter in SUMO2); alternate cross-link involves residue K879. Residues 879–906 are disordered; sequence KEEPVEEAEEEAPEASTAPKEAGPSKEA. Over residues 882-891 the composition is skewed to acidic residues; sequence PVEEAEEEAP. Residues 909 to 932 form a C2H2-type 6; atypical zinc finger; the sequence is WPCEKCGKMFTVHKQLERHQELLC. Residue K935 forms a Glycyl lysine isopeptide (Lys-Gly) (interchain with G-Cter in SUMO2) linkage. Residues 937 to 959 form a C2H2-type 7 zinc finger; the sequence is FICHVCNKAFRTNFRLWSHFQSH. The disordered stretch occupies residues 963–1014; sequence ASEESAHKESEVCPVPTNSPSPPPLPPPPPLPKIQPLEPDSPTGLSENPTPA. Pro residues predominate over residues 979-995; the sequence is TNSPSPPPLPPPPPLPK. S1003 bears the Phosphoserine mark. The segment at 1043-1065 adopts a C2H2-type 8 zinc-finger fold; it reads FMCKLCHRTFKTAFSLWSHEQTH.

In terms of assembly, homodimer. Interacts with ZBTB14. As to expression, ubiquitous in fetal and adult tissues.

Its subcellular location is the nucleus. Its function is as follows. Acts as a transcription repressor. The polypeptide is Zinc finger and BTB domain-containing protein 21 (ZBTB21) (Homo sapiens (Human)).